Consider the following 510-residue polypeptide: GMP synthase [glutamine-hydrolyzing] (510 aa).

The region spanning 5 to 195 (LVIVVDFGGQ…LFDICNLKGD (191 aa)) is the Glutamine amidotransferase type-1 domain. Cysteine 82 serves as the catalytic Nucleophile. Catalysis depends on residues histidine 169 and glutamate 171. Residues 196–385 (WSMSSFVDEK…LGIPHKLVWR (190 aa)) form the GMPS ATP-PPase domain. Residue 223-229 (SGGVDSS) coordinates ATP.

In terms of assembly, homodimer.

The catalysed reaction is XMP + L-glutamine + ATP + H2O = GMP + L-glutamate + AMP + diphosphate + 2 H(+). Its pathway is purine metabolism; GMP biosynthesis; GMP from XMP (L-Gln route): step 1/1. Catalyzes the synthesis of GMP from XMP. The polypeptide is GMP synthase [glutamine-hydrolyzing] (Clostridium kluyveri (strain NBRC 12016)).